A 126-amino-acid polypeptide reads, in one-letter code: uncharacterized protein (126 aa).

A run of 2 helical transmembrane segments spans residues 40 to 57 and 72 to 94; these read IDKW…VSFF and ILIA…ILGG.

The protein localises to the cell membrane. This is an uncharacterized protein from Pasteurella multocida (strain Pm70).